The sequence spans 669 residues: MMAGLLSTQCNSTLSKLKHLSNNPALSVLTSTHRKYSSKDGAGSEYLHKSIVPSMHYQKSLPRLPVPKLEDTIRRYLAAQRPLLNDEQYSNTEKLAQEFQSGAGKQLHEELVALDKKNKHTSYISAPWFDMYLSARESIVLNFNPFMSFNPDPKPEYNDQLVRATNMVCSAVRFMKTLRAGLLEPEVFHLNPAKSDTDSFKKLIRWVPPSISWFGAYMVNAYPLDMSQYFRLFNSTRIPKYKRDELLTDDRGRHLLVMKRGNLYVFDALDRDGNLIKPAEVQAHLKYILEDPTQASAFPLGVLTSENRDTWTGLRQKLLDAGNGEALQLVDTALFCLCLDEEVLRDHIHISHNMLHGDGCNRWYDKSFSVILAKDGQAAINFEHSWGDGVAVLRFQNEVFKDTTEKPLVGPGSQPASVDSSSAVRRLEFKLNDELKAGITKAKENFQAAVSKLTIDAMEFKKGGKEQLKKKKLSPDAIAQLAFQMGFLRQYGQTVATYESCSTAAFKHGRTETIRPASIHTKQCAKAFVQQPGQHSVEQLLGLLNECSKYHGQLTREAAMGQGFDRHLFAMRYLANSKGMALPSLYQDPAYAAINHNILSTSTLTSPAVSLGGFAPVVPDGFGVGYGVHDEWIGCNVSSYPARDVHEFLRCVHKSLEDIFTVLDGNPIH.

A mitochondrion-targeting transit peptide spans 1 to 36 (MMAGLLSTQCNSTLSKLKHLSNNPALSVLTSTHRKY). Residues 37-190 (SSKDGAGSEY…GLLEPEVFHL (154 aa)) are Mitochondrial matrix-facing. The segment at residues 191–220 (NPAKSDTDSFKKLIRWVPPSISWFGAYMVN) is an intramembrane region (note=Mitochondrial inner membrane). At 221–669 (AYPLDMSQYF…FTVLDGNPIH (449 aa)) the chain is on the mitochondrial matrix side. The Proton acceptor role is filled by histidine 384. 464–476 (GKEQLKKKKLSPD) provides a ligand contact to CoA. 3 residues coordinate (R)-carnitine: tyrosine 498, serine 500, and threonine 511.

Belongs to the carnitine/choline acetyltransferase family.

It is found in the mitochondrion inner membrane. It catalyses the reaction (R)-carnitine + hexadecanoyl-CoA = O-hexadecanoyl-(R)-carnitine + CoA. It carries out the reaction octanoyl-CoA + (R)-carnitine = O-octanoyl-(R)-carnitine + CoA. The catalysed reaction is decanoyl-CoA + (R)-carnitine = O-decanoyl-(R)-carnitine + CoA. The enzyme catalyses dodecanoyl-CoA + (R)-carnitine = O-dodecanoyl-R-carnitine + CoA. It catalyses the reaction tetradecanoyl-CoA + (R)-carnitine = O-tetradecanoyl-(R)-carnitine + CoA. It carries out the reaction (R)-carnitine + octadecanoyl-CoA = O-octadecanoyl-(R)-carnitine + CoA. The catalysed reaction is eicosanoyl-CoA + (R)-carnitine = O-eicosanoyl-(R)-carnitine + CoA. The enzyme catalyses (9Z)-tetradecenoyl-CoA + (R)-carnitine = O-(9Z)-tetradecenoyl-(R)-carnitine + CoA. It catalyses the reaction (5Z)-tetradecenoyl-CoA + (R)-carnitine = O-(5Z)-tetradecenoyl-(R)-carnitine + CoA. It carries out the reaction (R)-carnitine + (9Z)-octadecenoyl-CoA = O-(9Z)-octadecenoyl-(R)-carnitine + CoA. The catalysed reaction is 4,8-dimethylnonanoyl-CoA + (R)-carnitine = O-4,8-dimethylnonanoyl-(R)-carnitine + CoA. Its pathway is lipid metabolism; fatty acid beta-oxidation. Involved in the intramitochondrial synthesis of acylcarnitines from accumulated acyl-CoA metabolites. Reconverts acylcarnitines back into the respective acyl-CoA esters that can then undergo beta-oxidation, an essential step for the mitochondrial uptake of long-chain fatty acids and their subsequent beta-oxidation in the mitochondrion. Active with medium (C8-C12) and long-chain (C14-C18) acyl-CoA esters. This chain is Carnitine O-palmitoyltransferase 2, mitochondrial (cpt2), found in Danio rerio (Zebrafish).